The sequence spans 428 residues: Enolase 3 (428 aa).

Gln-163 provides a ligand contact to (2R)-2-phosphoglycerate. The active-site Proton donor is Glu-205. Mg(2+) is bound by residues Asp-242, Glu-286, and Asp-313. Positions 338, 367, 368, and 389 each coordinate (2R)-2-phosphoglycerate. Catalysis depends on Lys-338, which acts as the Proton acceptor.

The protein belongs to the enolase family. Requires Mg(2+) as cofactor.

The protein resides in the cytoplasm. It localises to the secreted. It is found in the cell surface. The enzyme catalyses (2R)-2-phosphoglycerate = phosphoenolpyruvate + H2O. It participates in carbohydrate degradation; glycolysis; pyruvate from D-glyceraldehyde 3-phosphate: step 4/5. Catalyzes the reversible conversion of 2-phosphoglycerate (2-PG) into phosphoenolpyruvate (PEP). It is essential for the degradation of carbohydrates via glycolysis. The polypeptide is Enolase 3 (Lactobacillus johnsonii (strain CNCM I-12250 / La1 / NCC 533)).